Consider the following 133-residue polypeptide: Small heat shock protein ibp (133 aa).

In terms of domain architecture, sHSP spans 11–126; it reads EQPLSENPNY…KPKKISINEE (116 aa).

The protein belongs to the small heat shock protein (HSP20) family.

This Wigglesworthia glossinidia brevipalpis protein is Small heat shock protein ibp (ibp).